The primary structure comprises 172 residues: MSSKRAKAKTTKKRPQRATSNVFAMFDQSQIQEFKEAFNMIDQNRDGFIDKEDLHDMLASLGKNPTDEYLEGMMNEAPGPINFTMFLTMFGEKLNGTDPEDVIRNAFACFDEEASGFIHEDHLRELLTTMGDRFTDEEVDEMYREAPIDKKGNFNYVEFTRILKHGAKDKDD.

Over residues 1 to 16 (MSSKRAKAKTTKKRPQ) the composition is skewed to basic residues. The interval 1–20 (MSSKRAKAKTTKKRPQRATS) is disordered. Serine 2 is subject to N-acetylserine. A Phosphothreonine; by MLCK, CIT and ROCK2 modification is found at threonine 19. Serine 20 bears the Phosphoserine; by CDC42BP, CIT, MLCK, PAK1, ROCK1, ROCK2, DAPK1, DAPK2 and ZIPK/DAPK3 mark. EF-hand domains lie at 29 to 64 (SQIQEFKEAFNMIDQNRDGFIDKEDLHDMLASLGKN), 98 to 133 (DPEDVIRNAFACFDEEASGFIHEDHLRELLTTMGDR), and 134 to 169 (FTDEEVDEMYREAPIDKKGNFNYVEFTRILKHGAKD). The Ca(2+) site is built by aspartate 42, asparagine 44, aspartate 46, and aspartate 53.

Myosin is a hexamer of 2 heavy chains and 4 light chains: interacts with myosin heavy chain MYO19. Interacts with LUZP1; the interaction results in inhibition of phosphorylation of MYL9 by DAPK3. In terms of processing, phosphorylation increases the actin-activated myosin ATPase activity and thereby regulates the contractile activity. It is required to generate the driving force in the migration of the cells but not necessary for localization of myosin-2 at the leading edge. Phosphorylation is required for myotube formation. Phosphorylated by DAPK3; DAPK3-mediated phosphorylation is inhibited by LUZP1.

The protein localises to the cytoplasm. Its subcellular location is the cytoskeleton. It is found in the cell cortex. Functionally, myosin regulatory subunit that plays an important role in regulation of both smooth muscle and nonmuscle cell contractile activity via its phosphorylation. Implicated in cytokinesis, receptor capping, and cell locomotion. In myoblasts, regulates PIEZO1-dependent cortical actomyosin assembly involved in myotube formation. This is Myosin regulatory light polypeptide 9 (Myl9) from Mus musculus (Mouse).